The chain runs to 340 residues: Inactive hyaluronidase B (340 aa).

Cystine bridges form between Cys21–Cys310 and Cys187–Cys199. Residues Asn66 and Asn81 are each glycosylated (N-linked (GlcNAc...) asparagine).

This sequence belongs to the glycosyl hydrolase 56 family. In terms of processing, N-glycosylated on at least two Asn residues by identical heptasaccharide units composed of Man, GlcNAc, and Fuc residues in the molar ration of 3:2:2. As to expression, expressed by the venom gland.

It is found in the secreted. In terms of biological role, has no hyaluronidase activity. This chain is Inactive hyaluronidase B, found in Vespula vulgaris (Yellow jacket).